Consider the following 186-residue polypeptide: Negative modulator of initiation of replication (186 aa).

Belongs to the SeqA family. In terms of assembly, homodimer. Polymerizes to form helical filaments.

The protein resides in the cytoplasm. In terms of biological role, negative regulator of replication initiation, which contributes to regulation of DNA replication and ensures that replication initiation occurs exactly once per chromosome per cell cycle. Binds to pairs of hemimethylated GATC sequences in the oriC region, thus preventing assembly of replication proteins and re-initiation at newly replicated origins. Repression is relieved when the region becomes fully methylated. This Glaesserella parasuis serovar 5 (strain SH0165) (Haemophilus parasuis) protein is Negative modulator of initiation of replication.